Here is a 319-residue protein sequence, read N- to C-terminus: Probable enoyl-CoA hydratase alpha subunit (319 aa).

A DUF35 region spans residues 199 to 298 (FEAAKQRRLV…EIGMPVVLDW (100 aa)).

This sequence belongs to the thioester dehydratase family. Heterodimer composed of ChsH1 and ChsH2. Two heterodimers combine to form a heterotetramer. The complex interacts with Ltp2 via the DUF35 C-terminal region of ChsH2.

Its function is as follows. Probably involved in bile acid degradation. The polypeptide is Probable enoyl-CoA hydratase alpha subunit (Thermomonospora curvata (strain ATCC 19995 / DSM 43183 / JCM 3096 / KCTC 9072 / NBRC 15933 / NCIMB 10081 / Henssen B9)).